A 130-amino-acid chain; its full sequence is Anti-adapter protein IraD (130 aa).

The protein belongs to the GpW/Gp25 family. IraD subfamily. As to quaternary structure, interacts with RssB.

It is found in the cytoplasm. Its function is as follows. Inhibits RpoS proteolysis by regulating RssB activity, thereby increasing the stability of the sigma stress factor RpoS during oxidative stress. Its effect on RpoS stability is due to its interaction with RssB, which probably blocks the interaction of RssB with RpoS, and the consequent delivery of the RssB-RpoS complex to the ClpXP protein degradation pathway. This chain is Anti-adapter protein IraD, found in Escherichia coli O45:K1 (strain S88 / ExPEC).